Reading from the N-terminus, the 142-residue chain is Large ribosomal subunit protein uL11 (142 aa).

This sequence belongs to the universal ribosomal protein uL11 family. In terms of assembly, part of the ribosomal stalk of the 50S ribosomal subunit. Interacts with L10 and the large rRNA to form the base of the stalk. L10 forms an elongated spine to which L12 dimers bind in a sequential fashion forming a multimeric L10(L12)X complex. One or more lysine residues are methylated.

In terms of biological role, forms part of the ribosomal stalk which helps the ribosome interact with GTP-bound translation factors. The protein is Large ribosomal subunit protein uL11 of Thermobifida fusca (strain YX).